We begin with the raw amino-acid sequence, 883 residues long: Phosphoenolpyruvate carboxylase (883 aa).

Catalysis depends on residues H138 and K546.

It belongs to the PEPCase type 1 family. The cofactor is Mg(2+).

It catalyses the reaction oxaloacetate + phosphate = phosphoenolpyruvate + hydrogencarbonate. Its function is as follows. Forms oxaloacetate, a four-carbon dicarboxylic acid source for the tricarboxylic acid cycle. In Escherichia coli O81 (strain ED1a), this protein is Phosphoenolpyruvate carboxylase.